The following is a 1037-amino-acid chain: Caspase recruitment domain-containing protein 6 (1037 aa).

At Ala2 the chain carries N-acetylalanine. The region spanning 3-94 (TESTPSEIIE…QSAAICGLRH (92 aa)) is the CARD domain. Ser154 is subject to Phosphoserine. Disordered stretches follow at residues 235 to 270 (DPEH…TSLS), 669 to 704 (VSSG…PIQE), and 887 to 1037 (RTSH…GGKH). A compositionally biased stretch (acidic residues) spans 242–261 (DGEEDFENSETTEFSGEEPS). Residues 690–699 (LKSSSKSQAL) are compositionally biased toward low complexity. Composition is skewed to polar residues over residues 911-928 (ASQQ…SNPA), 938-954 (KSSQ…TVKH), and 963-984 (VPSQ…QTKP). Ser985 carries the phosphoserine modification. Over residues 994 to 1012 (PSQPWPPQSKPSQPRPPQP) the composition is skewed to pro residues. Over residues 1023 to 1037 (KAHHSKAGQKRGGKH) the composition is skewed to basic residues.

May be involved in apoptosis. This is Caspase recruitment domain-containing protein 6 (CARD6) from Homo sapiens (Human).